We begin with the raw amino-acid sequence, 461 residues long: Argininosuccinate lyase (461 aa).

Belongs to the lyase 1 family. Argininosuccinate lyase subfamily.

It is found in the cytoplasm. The catalysed reaction is 2-(N(omega)-L-arginino)succinate = fumarate + L-arginine. The protein operates within amino-acid biosynthesis; L-arginine biosynthesis; L-arginine from L-ornithine and carbamoyl phosphate: step 3/3. The polypeptide is Argininosuccinate lyase (Shewanella piezotolerans (strain WP3 / JCM 13877)).